Reading from the N-terminus, the 280-residue chain is Meiotic spindle formation protein 2 (280 aa).

Positions 1 to 104 are disordered; it reads MSGLDDRKKL…LPKSSPESSV (104 aa). The span at 72–92 shows a compositional bias: basic and acidic residues; it reads LHSESKKELSRNPVSRGEEHS. Residues 93 to 104 are compositionally biased toward low complexity; it reads SSLPKSSPESSV.

As to quaternary structure, interacts with mei-1.

It localises to the cytoplasm. Its subcellular location is the cytoskeleton. The protein resides in the spindle pole. Functionally, forms a heterodimeric complex in conjunction with mei-1 which severs microtubules in vitro in an ATP-dependent manner. This activity may promote rapid reorganization of cellular microtubule arrays. May act to target mei-1 within the cell. Required specifically for meiotic spindle formation in the female germline. The chain is Meiotic spindle formation protein 2 (mei-2) from Caenorhabditis elegans.